The sequence spans 393 residues: CCA-adding enzyme (393 aa).

ATP is bound by residues G27 and R30. G27 and R30 together coordinate CTP. Residues D40 and D42 each contribute to the Mg(2+) site. Residues R111, D154, R157, R160, and R163 each contribute to the ATP site. The CTP site is built by R111, D154, R157, R160, and R163.

It belongs to the tRNA nucleotidyltransferase/poly(A) polymerase family. Bacterial CCA-adding enzyme type 3 subfamily. Homodimer. Mg(2+) is required as a cofactor.

The enzyme catalyses a tRNA precursor + 2 CTP + ATP = a tRNA with a 3' CCA end + 3 diphosphate. The catalysed reaction is a tRNA with a 3' CCA end + 2 CTP + ATP = a tRNA with a 3' CCACCA end + 3 diphosphate. Catalyzes the addition and repair of the essential 3'-terminal CCA sequence in tRNAs without using a nucleic acid template. Adds these three nucleotides in the order of C, C, and A to the tRNA nucleotide-73, using CTP and ATP as substrates and producing inorganic pyrophosphate. tRNA 3'-terminal CCA addition is required both for tRNA processing and repair. Also involved in tRNA surveillance by mediating tandem CCA addition to generate a CCACCA at the 3' terminus of unstable tRNAs. While stable tRNAs receive only 3'-terminal CCA, unstable tRNAs are marked with CCACCA and rapidly degraded. This Listeria monocytogenes serotype 4b (strain F2365) protein is CCA-adding enzyme.